The primary structure comprises 227 residues: Nucleoside triphosphate pyrophosphatase (227 aa).

Asp77 (proton acceptor) is an active-site residue.

This sequence belongs to the Maf family. The cofactor is a divalent metal cation.

It is found in the cytoplasm. The enzyme catalyses a ribonucleoside 5'-triphosphate + H2O = a ribonucleoside 5'-phosphate + diphosphate + H(+). The catalysed reaction is a 2'-deoxyribonucleoside 5'-triphosphate + H2O = a 2'-deoxyribonucleoside 5'-phosphate + diphosphate + H(+). Its function is as follows. Nucleoside triphosphate pyrophosphatase. May have a dual role in cell division arrest and in preventing the incorporation of modified nucleotides into cellular nucleic acids. The sequence is that of Nucleoside triphosphate pyrophosphatase from Rickettsia typhi (strain ATCC VR-144 / Wilmington).